The sequence spans 137 residues: Protein PsiE homolog (137 aa).

4 consecutive transmembrane segments (helical) span residues 15-35 (LRIT…AFLI), 55-75 (YYMT…ALIV), 82-102 (FHFP…RFII), and 108-128 (ATST…LFLA).

This sequence belongs to the PsiE family.

The protein localises to the cell membrane. This chain is Protein PsiE homolog, found in Listeria innocua serovar 6a (strain ATCC BAA-680 / CLIP 11262).